A 172-amino-acid chain; its full sequence is Large ribosomal subunit protein uL10 (172 aa).

It belongs to the universal ribosomal protein uL10 family. Part of the ribosomal stalk of the 50S ribosomal subunit. The N-terminus interacts with L11 and the large rRNA to form the base of the stalk. The C-terminus forms an elongated spine to which L12 dimers bind in a sequential fashion forming a multimeric L10(L12)X complex.

Functionally, forms part of the ribosomal stalk, playing a central role in the interaction of the ribosome with GTP-bound translation factors. The chain is Large ribosomal subunit protein uL10 from Brucella anthropi (strain ATCC 49188 / DSM 6882 / CCUG 24695 / JCM 21032 / LMG 3331 / NBRC 15819 / NCTC 12168 / Alc 37) (Ochrobactrum anthropi).